The following is a 114-amino-acid chain: Protein lin-52 homolog (114 aa).

2 positions are modified to phosphoserine: serine 26 and serine 51.

The protein belongs to the lin-52 family. In terms of assembly, component of the DREAM complex (also named LINC complex) at least composed of E2F4, E2F5, LIN9, LIN37, LIN52, LIN54, MYBL1, MYBL2, RBL1, RBL2, RBBP4, TFDP1 and TFDP2. The complex exists in quiescent cells where it represses cell cycle-dependent genes. It dissociates in S phase when LIN9, LIN37, LIN52 and LIN54 form a subcomplex that binds to MYBL2.

The sequence is that of Protein lin-52 homolog (LIN52) from Pongo abelii (Sumatran orangutan).